A 655-amino-acid polypeptide reads, in one-letter code: Very long-chain specific acyl-CoA dehydrogenase, mitochondrial (655 aa).

The transit peptide at 1 to 40 (MQAARMAASLGRQLLRLGGGSSRLTALLGQPRPGPARRPY) directs the protein to the mitochondrion. Positions 23–42 (RLTALLGQPRPGPARRPYAG) are disordered. The tract at residues 41–482 (AGGAAQLALD…ALQGCMDKGK (442 aa)) is catalytic. Residue lysine 51 is modified to N6-acetyllysine. Lysine 71 carries the N6-acetyllysine; alternate modification. Lysine 71 carries the N6-succinyllysine; alternate modification. Lysine 195 is subject to N6-succinyllysine. 214–223 (FCLTEPSSGS) is a binding site for FAD. Cysteine 237 is modified (S-nitrosocysteine). Lysine 239 carries the post-translational modification N6-acetyllysine; alternate. Lysine 239 is subject to N6-succinyllysine; alternate. An FAD-binding site is contributed by 249-251 (WIS). An N6-acetyllysine; alternate mark is found at lysine 276 and lysine 278. N6-succinyllysine; alternate is present on residues lysine 276 and lysine 278. Lysine 298 is subject to N6-acetyllysine. Lysine 331 is modified (N6-acetyllysine; alternate). Lysine 331 is subject to N6-succinyllysine; alternate. Lysine 372 carries the post-translational modification N6-succinyllysine. Position 461–463 (461–463 (FEG)) interacts with substrate. Catalysis depends on glutamate 462, which acts as the Proton acceptor. FAD is bound at residue 464–466 (TND). Position 482 is an N6-acetyllysine; alternate (lysine 482). Lysine 482 is subject to N6-succinyllysine; alternate. Positions 483–516 (ELSGLGSALKNPFGNAGLLLGEAGKQLRRRAGLG) are membrane-anchoring. Phosphoserine is present on residues serine 517 and serine 522. Lysine 550 is modified (N6-acetyllysine). Lysine 556 carries the post-translational modification N6-acetyllysine; alternate. Lysine 556 carries the N6-succinyllysine; alternate modification. Glutamine 562 is an FAD binding site. N6-succinyllysine is present on lysine 639.

It belongs to the acyl-CoA dehydrogenase family. As to quaternary structure, homodimer. Homodimerizes after import into the mitochondrion. It depends on FAD as a cofactor. S-nitrosylation at Cys-237 in liver improves catalytic efficiency. Predominantly expressed in heart and skeletal muscle (at protein level). Also detected in kidney and liver (at protein level).

It is found in the mitochondrion inner membrane. The catalysed reaction is a very-long-chain 2,3-saturated fatty acyl-CoA + oxidized [electron-transfer flavoprotein] + H(+) = a very-long-chain (2E)-enoyl-CoA + reduced [electron-transfer flavoprotein]. It carries out the reaction decanoyl-CoA + oxidized [electron-transfer flavoprotein] + H(+) = (2E)-decenoyl-CoA + reduced [electron-transfer flavoprotein]. The enzyme catalyses dodecanoyl-CoA + oxidized [electron-transfer flavoprotein] + H(+) = (2E)-dodecenoyl-CoA + reduced [electron-transfer flavoprotein]. It catalyses the reaction tetradecanoyl-CoA + oxidized [electron-transfer flavoprotein] + H(+) = (2E)-tetradecenoyl-CoA + reduced [electron-transfer flavoprotein]. The catalysed reaction is oxidized [electron-transfer flavoprotein] + hexadecanoyl-CoA + H(+) = (2E)-hexadecenoyl-CoA + reduced [electron-transfer flavoprotein]. It carries out the reaction octadecanoyl-CoA + oxidized [electron-transfer flavoprotein] + H(+) = (2E)-octadecenoyl-CoA + reduced [electron-transfer flavoprotein]. The enzyme catalyses eicosanoyl-CoA + oxidized [electron-transfer flavoprotein] + H(+) = (2E)-eicosenoyl-CoA + reduced [electron-transfer flavoprotein]. It catalyses the reaction docosanoyl-CoA + oxidized [electron-transfer flavoprotein] + H(+) = (2E)-docosenoyl-CoA + reduced [electron-transfer flavoprotein]. The catalysed reaction is tetracosanoyl-CoA + oxidized [electron-transfer flavoprotein] + H(+) = (2E)-tetracosenoyl-CoA + reduced [electron-transfer flavoprotein]. It carries out the reaction (9Z)-hexadecenoyl-CoA + oxidized [electron-transfer flavoprotein] + H(+) = (2E,9Z)-hexadecadienoyl-CoA + reduced [electron-transfer flavoprotein]. The enzyme catalyses oxidized [electron-transfer flavoprotein] + (9Z)-octadecenoyl-CoA + H(+) = (2E,9Z)-octadecadienoyl-CoA + reduced [electron-transfer flavoprotein]. It participates in lipid metabolism; mitochondrial fatty acid beta-oxidation. Very long-chain specific acyl-CoA dehydrogenase is one of the acyl-CoA dehydrogenases that catalyze the first step of mitochondrial fatty acid beta-oxidation, an aerobic process breaking down fatty acids into acetyl-CoA and allowing the production of energy from fats. The first step of fatty acid beta-oxidation consists in the removal of one hydrogen from C-2 and C-3 of the straight-chain fatty acyl-CoA thioester, resulting in the formation of trans-2-enoyl-CoA. Among the different mitochondrial acyl-CoA dehydrogenases, very long-chain specific acyl-CoA dehydrogenase acts specifically on acyl-CoAs with saturated 12 to 24 carbons long primary chains. The sequence is that of Very long-chain specific acyl-CoA dehydrogenase, mitochondrial from Homo sapiens (Human).